We begin with the raw amino-acid sequence, 428 residues long: UPF0597 protein BF3772 (428 aa).

This sequence belongs to the UPF0597 family.

In Bacteroides fragilis (strain YCH46), this protein is UPF0597 protein BF3772.